A 492-amino-acid polypeptide reads, in one-letter code: MIKLFNTLSKNIEVFKPIDEVVKIYCCGVTVYDLCHLGHARSYIAWDILRRFLIYSDYKVKYVQNFTDIDDKILKRAKEENSSMNEVSEKNITEFHKDMDALGIMRPDSMPKATNHICNICSFIKVLEDKGFAYIRGGDVYYSVFKNKNYGKLSNQNILEQNINQQGRITTDESNKKENPQDFALWKKAKDNEPSFDSPWGKGRPGWHIECSAMVKDELGETIDIHLGGSDLIFPHHENEIAQSESANNKKLANYWLHNGMVNVNGQKMSKSLKNFTTIRDLLDSGTSPMTLRYFVLTVNYRKPLDFTDEALKSASEAWKNINVALSLFDITKKENLSIEVNETNEFVEETYKDMINYEISQKKIKFTNALNNDLNTAGAIAIIYELAKPLKNFINQFQRIKNLEINTNEKFHLRETFKTLEELTDVLGLKKEEIIIDNRINEDQILSLINKRLGAKKEKDYAEADKIRNLLKEKGVELIDQSPELTTWVRI.

Cysteine 27 is a Zn(2+) binding site. The short motif at 29-39 is the 'HIGH' region element; sequence VTVYDLCHLGH. Positions 211, 236, and 240 each coordinate Zn(2+). Positions 268 to 272 match the 'KMSKS' region motif; sequence KMSKS. Lysine 271 contacts ATP.

Belongs to the class-I aminoacyl-tRNA synthetase family. Monomer. The cofactor is Zn(2+).

It localises to the cytoplasm. The enzyme catalyses tRNA(Cys) + L-cysteine + ATP = L-cysteinyl-tRNA(Cys) + AMP + diphosphate. The polypeptide is Cysteine--tRNA ligase (Prochlorococcus marinus subsp. pastoris (strain CCMP1986 / NIES-2087 / MED4)).